The following is a 400-amino-acid chain: Argininosuccinate synthase (400 aa).

Residue 8 to 16 coordinates ATP; it reads AYSGGLDTS. An L-citrulline-binding site is contributed by tyrosine 85. Glycine 115 is a binding site for ATP. L-aspartate is bound by residues threonine 117, asparagine 121, and aspartate 122. Position 121 (asparagine 121) interacts with L-citrulline. Positions 125, 173, 258, and 270 each coordinate L-citrulline.

Belongs to the argininosuccinate synthase family. Type 1 subfamily. In terms of assembly, homotetramer.

The protein localises to the cytoplasm. The enzyme catalyses L-citrulline + L-aspartate + ATP = 2-(N(omega)-L-arginino)succinate + AMP + diphosphate + H(+). It functions in the pathway amino-acid biosynthesis; L-arginine biosynthesis; L-arginine from L-ornithine and carbamoyl phosphate: step 2/3. In Staphylococcus haemolyticus (strain JCSC1435), this protein is Argininosuccinate synthase.